The primary structure comprises 170 residues: Probable chemoreceptor glutamine deamidase CheD (170 aa).

The protein belongs to the CheD family.

It carries out the reaction L-glutaminyl-[protein] + H2O = L-glutamyl-[protein] + NH4(+). In terms of biological role, probably deamidates glutamine residues to glutamate on methyl-accepting chemotaxis receptors (MCPs), playing an important role in chemotaxis. The sequence is that of Probable chemoreceptor glutamine deamidase CheD from Maridesulfovibrio salexigens (strain ATCC 14822 / DSM 2638 / NCIMB 8403 / VKM B-1763) (Desulfovibrio salexigens).